A 647-amino-acid chain; its full sequence is Endogenous retrovirus group K member 8 Gag polyprotein (647 aa).

Glycine 2 carries the N-myristoyl glycine lipid modification. Residues glycine 165–leucine 264 are disordered. Positions glycine 232–proline 247 are enriched in pro residues. 2 consecutive CCHC-type zinc fingers follow at residues glycine 544–valine 561 and aspartate 580–serine 597. The segment at lysine 598–cysteine 641 is disordered. The span at glutamine 604–glycine 622 shows a compositional bias: polar residues.

Belongs to the beta type-B retroviral Gag protein family. HERV class-II K(HML-2) gag subfamily. Myristoylation is essential for retroviral assembly. Alteration of the glycine residue leads to a block in the budding of particles and an accumulation of Gag inside the cell. Post-translationally, specific enzymatic cleavages may yield mature proteins.

The protein localises to the cell membrane. Its function is as follows. The products of the Gag polyproteins of infectious retroviruses perform highly complex orchestrated tasks during the assembly, budding, maturation, and infection stages of the viral replication cycle. During viral assembly, the proteins form membrane associations and self-associations that ultimately result in budding of an immature virion from the infected cell. Gag precursors also function during viral assembly to selectively bind and package two plus strands of genomic RNA. Endogenous Gag proteins may have kept, lost or modified their original function during evolution. This is Endogenous retrovirus group K member 8 Gag polyprotein (ERVK-8) from Homo sapiens (Human).